We begin with the raw amino-acid sequence, 166 residues long: Phosphopantetheine adenylyltransferase (166 aa).

Position 11 (Ser11) interacts with substrate. ATP-binding positions include 11-12 (SF) and His19. Residues Lys43, Ala76, and Arg90 each contribute to the substrate site. ATP is bound by residues 91–93 (GLR), Glu101, and 126–132 (LQPISSS).

Belongs to the bacterial CoaD family. Homohexamer. Mg(2+) is required as a cofactor.

The protein resides in the cytoplasm. It catalyses the reaction (R)-4'-phosphopantetheine + ATP + H(+) = 3'-dephospho-CoA + diphosphate. The protein operates within cofactor biosynthesis; coenzyme A biosynthesis; CoA from (R)-pantothenate: step 4/5. Its function is as follows. Reversibly transfers an adenylyl group from ATP to 4'-phosphopantetheine, yielding dephospho-CoA (dPCoA) and pyrophosphate. In Streptococcus equi subsp. zooepidemicus (strain H70), this protein is Phosphopantetheine adenylyltransferase.